We begin with the raw amino-acid sequence, 98 residues long: Hainantoxin-XVII-2 (98 aa).

Positions 1 to 40 (MTTVGVSLFRRSPEKITMKIATFLGLSFLLIASYVLICEA) are cleaved as a signal peptide. Positions 41–64 (QHPGFQELLILEENMRDPENSKER) are excised as a propeptide. Intrachain disulfides connect Cys-66/Cys-81 and Cys-73/Cys-85.

Belongs to the hainantoxin family. 17 subfamily. As to expression, expressed by the venom gland.

Its subcellular location is the secreted. In terms of biological role, putative ion channel inhibitor. In Cyriopagopus hainanus (Chinese bird spider), this protein is Hainantoxin-XVII-2.